The primary structure comprises 210 residues: dTTP/UTP pyrophosphatase (210 aa).

The active-site Proton acceptor is aspartate 89.

It belongs to the Maf family. YhdE subfamily. The cofactor is a divalent metal cation.

It is found in the cytoplasm. The enzyme catalyses dTTP + H2O = dTMP + diphosphate + H(+). It catalyses the reaction UTP + H2O = UMP + diphosphate + H(+). Functionally, nucleoside triphosphate pyrophosphatase that hydrolyzes dTTP and UTP. May have a dual role in cell division arrest and in preventing the incorporation of modified nucleotides into cellular nucleic acids. The chain is dTTP/UTP pyrophosphatase from Burkholderia thailandensis (strain ATCC 700388 / DSM 13276 / CCUG 48851 / CIP 106301 / E264).